A 404-amino-acid chain; its full sequence is MSTPTYMDYSATTPVDERVAQKMMQYLTTDGNFGNPASNSHYYGWKADEAVKKARHQVADLVGADSKEIVWTSGATESDNLAIKGIAHFYHKKGNHIITLKTEHKAVLDTCRQLERENYEATYLDPMPNGLLDLNVLKKAIREDTILVSIMHVNNEIGVIQDIEAIGNLCRENKIFFHVDAAQSAGKVTIDLSKLPVDLMSFSAHKIYGPKGMGALYVRRKPRVRIEAQMHGGGHERGMRSGTLATHQIVGMGEAFAIAQAEMKEENSKIRQLRDRLLAGFVNMEEVVINGDMKNRIPGNLNISFNYVEGESLMMAVNDIAVSSGSACTSSSLEPSYVLRALGLSDELAHSSIRFTIGRYTTEAQVDKAINLVRTKVDKLRDLSPLWDMFKDGIDISKVEWTAH.

Pyridoxal 5'-phosphate contacts are provided by residues 75 to 76 (AT), Asn-155, Gln-183, and 203 to 205 (SAH). Position 206 is an N6-(pyridoxal phosphate)lysine (Lys-206). Thr-243 is a binding site for pyridoxal 5'-phosphate. The Cysteine persulfide intermediate role is filled by Cys-328. Residue Cys-328 participates in [2Fe-2S] cluster binding.

Belongs to the class-V pyridoxal-phosphate-dependent aminotransferase family. NifS/IscS subfamily. Homodimer. Forms a heterotetramer with IscU, interacts with other sulfur acceptors. The cofactor is pyridoxal 5'-phosphate.

Its subcellular location is the cytoplasm. The enzyme catalyses (sulfur carrier)-H + L-cysteine = (sulfur carrier)-SH + L-alanine. The protein operates within cofactor biosynthesis; iron-sulfur cluster biosynthesis. In terms of biological role, master enzyme that delivers sulfur to a number of partners involved in Fe-S cluster assembly, tRNA modification or cofactor biosynthesis. Catalyzes the removal of elemental sulfur atoms from cysteine to produce alanine. Functions as a sulfur delivery protein for Fe-S cluster synthesis onto IscU, an Fe-S scaffold assembly protein, as well as other S acceptor proteins. The protein is Cysteine desulfurase IscS of Ruthia magnifica subsp. Calyptogena magnifica.